Here is a 404-residue protein sequence, read N- to C-terminus: Cysteine desulfurase IscS (404 aa).

Residues 75 to 76 (AT), Asn155, Gln183, and 203 to 205 (SGH) each bind pyridoxal 5'-phosphate. At Lys206 the chain carries N6-(pyridoxal phosphate)lysine. Thr243 serves as a coordination point for pyridoxal 5'-phosphate. Cys328 serves as the catalytic Cysteine persulfide intermediate. Cys328 is a [2Fe-2S] cluster binding site.

It belongs to the class-V pyridoxal-phosphate-dependent aminotransferase family. NifS/IscS subfamily. In terms of assembly, homodimer. Forms a heterotetramer with IscU, interacts with other sulfur acceptors. Pyridoxal 5'-phosphate serves as cofactor.

The protein localises to the cytoplasm. It carries out the reaction (sulfur carrier)-H + L-cysteine = (sulfur carrier)-SH + L-alanine. The protein operates within cofactor biosynthesis; iron-sulfur cluster biosynthesis. Functionally, master enzyme that delivers sulfur to a number of partners involved in Fe-S cluster assembly, tRNA modification or cofactor biosynthesis. Catalyzes the removal of elemental sulfur atoms from cysteine to produce alanine. Functions as a sulfur delivery protein for Fe-S cluster synthesis onto IscU, an Fe-S scaffold assembly protein, as well as other S acceptor proteins. The sequence is that of Cysteine desulfurase IscS from Pectobacterium carotovorum subsp. carotovorum (strain PC1).